A 58-amino-acid polypeptide reads, in one-letter code: Small ribosomal subunit protein bS21 (58 aa).

A disordered region spans residues 37–58 (FYEKPSVKRKRKSEAARKRKKF). Over residues 43 to 58 (VKRKRKSEAARKRKKF) the composition is skewed to basic residues.

This sequence belongs to the bacterial ribosomal protein bS21 family.

This chain is Small ribosomal subunit protein bS21, found in Streptococcus sanguinis (strain SK36).